A 109-amino-acid chain; its full sequence is MKINNFIYIFLAAYLATFFRLTLNNNFFISIIGSFLVGFFVSKRLSYSNEKILFSGFFSCFTSFSGFIYFLYKILNQGDWIKFIIFFNLIIILNLLTMIFGFWISRKIT.

3 helical membrane-spanning segments follow: residues 21 to 41, 52 to 72, and 84 to 104; these read LTLN…GFFV, ILFS…YFLY, and IIFF…GFWI.

This sequence belongs to the fluoride channel Fluc/FEX (TC 1.A.43) family.

It localises to the cell inner membrane. It catalyses the reaction fluoride(in) = fluoride(out). Fluoride-specific ion channel. Important for reducing fluoride concentration in the cell, thus reducing its toxicity. In Prochlorococcus marinus (strain MIT 9301), this protein is Fluoride-specific ion channel FluC.